The primary structure comprises 349 residues: Quinolinate synthase (349 aa).

Histidine 52 and serine 69 together coordinate iminosuccinate. Residue cysteine 114 participates in [4Fe-4S] cluster binding. Iminosuccinate contacts are provided by residues tyrosine 140–asparagine 142 and serine 157. Cysteine 201 lines the [4Fe-4S] cluster pocket. Iminosuccinate-binding positions include histidine 227–glutamate 229 and threonine 255. Cysteine 300 is a [4Fe-4S] cluster binding site.

This sequence belongs to the quinolinate synthase family. Type 2 subfamily. The cofactor is [4Fe-4S] cluster.

The protein localises to the cytoplasm. It carries out the reaction iminosuccinate + dihydroxyacetone phosphate = quinolinate + phosphate + 2 H2O + H(+). It functions in the pathway cofactor biosynthesis; NAD(+) biosynthesis; quinolinate from iminoaspartate: step 1/1. Catalyzes the condensation of iminoaspartate with dihydroxyacetone phosphate to form quinolinate. The protein is Quinolinate synthase of Mycobacterium bovis (strain BCG / Tokyo 172 / ATCC 35737 / TMC 1019).